A 266-amino-acid polypeptide reads, in one-letter code: Undecaprenyl-diphosphatase (266 aa).

8 helical membrane-spanning segments follow: residues 1-21 (METF…FLPI), 39-59 (QGLS…VIYF), 87-107 (WWII…KDFI), 111-131 (FRNT…LWAA), 144-164 (MGWK…IPGT), 183-203 (AAAR…ALLV), 218-238 (ALGL…HFFL), and 244-264 (IGMT…LGLL).

Belongs to the UppP family.

The protein resides in the cell inner membrane. It carries out the reaction di-trans,octa-cis-undecaprenyl diphosphate + H2O = di-trans,octa-cis-undecaprenyl phosphate + phosphate + H(+). Its function is as follows. Catalyzes the dephosphorylation of undecaprenyl diphosphate (UPP). Confers resistance to bacitracin. The polypeptide is Undecaprenyl-diphosphatase (Shewanella frigidimarina (strain NCIMB 400)).